The primary structure comprises 261 residues: Proliferating cell nuclear antigen (261 aa).

N6-acetyllysine occurs at positions 14, 77, and 80. The DNA-binding element occupies 61–80; that stretch reads RCDRNLAMGVNLTSMSKILK. A disulfide bond links Cys-135 and Cys-162. Lys-164 is covalently cross-linked (Glycyl lysine isopeptide (Lys-Gly) (interchain with G-Cter in SUMO2); alternate). Lys-164 is covalently cross-linked (Glycyl lysine isopeptide (Lys-Gly) (interchain with G-Cter in ubiquitin); alternate). The residue at position 211 (Tyr-211) is a Phosphotyrosine; by EGFR. Lys-248 carries the N6-acetyllysine modification. Lys-254 participates in a covalent cross-link: Glycyl lysine isopeptide (Lys-Gly) (interchain with G-Cter in SUMO2).

It belongs to the PCNA family. In terms of assembly, homotrimer. Interacts with p300/EP300; the interaction occurs on chromatin in UV-irradiated damaged cells. Interacts with CREBBP (via transactivation domain and C-terminus); the interaction occurs on chromatin in UV-irradiated damaged cells. Directly interacts with POLD1, POLD3 and POLD4 subunits of the DNA polymerase delta complex, POLD3 being the major interacting partner; the interaction with POLD3 is inhibited by CDKN1A/p21(CIP1). Forms a complex with activator 1 heteropentamer in the presence of ATP. Interacts with EXO1, POLH, POLK, DNMT1, ERCC5, FEN1, CDC6 and POLDIP2. Interacts with POLB. Interacts with APEX2; this interaction is triggered by reactive oxygen species and increased by misincorporation of uracil in nuclear DNA. Forms a ternary complex with DNTTIP2 and core histone. Interacts with KCTD10. Interacts with PPP1R15A. Interacts with SMARCA5/SNF2H. Interacts with BAZ1B/WSTF; the interaction is direct and is required for BAZ1B/WSTF binding to replication foci during S phase. Interacts with HLTF and SHPRH. Interacts with NUDT15; this interaction is disrupted in response to UV irradiation and acetylation. Interacts with CDKN1A/p21(CIP1) and CDT1; interacts via their PIP-box which also recruits the DCX(DTL) complex. The interaction with CDKN1A inhibits POLD3 binding. Interacts with DDX11. Interacts with EGFR; positively regulates PCNA. Interacts with PARPBP. Interacts (when ubiquitinated) with SPRTN; leading to enhance RAD18-mediated PCNA ubiquitination. Interacts (when polyubiquitinated) with ZRANB3. Interacts with SMARCAD1. Interacts with CDKN1C. Interacts with PCLAF (via PIP-box). Interacts with RTEL1 (via PIP-box); the interaction is direct and essential for the suppression of telomere fragility. Interacts with FAM111A (via PIP-box); the interaction is direct and required for PCNA loading on chromatin binding. Interacts with LIG1. Interacts with SETMAR. Interacts with ANKRD17. Interacts with FBXO18/FBH1 (via PIP-box); the interaction recruits the DCX(DTL) complex and promotes ubiquitination and degradation of FBXO18/FBH1. Interacts with POLN. Interacts with SDE2 (via PIP-box); the interaction is direct and prevents ultraviolet light induced monoubiquitination. Component of the replisome complex composed of at least DONSON, MCM2, MCM7, PCNA and TICRR; interaction at least with PCNA occurs during DNA replication. Interacts with MAPK15; the interaction is chromatin binding dependent and prevents MDM2-mediated PCNA destruction by inhibiting the association of PCNA with MDM2. Interacts with PARP10 (via PIP-box). Interacts with DDI2. Interacts with HMCES (via PIP-box). Interacts with TRAIP (via PIP-box). Interacts with UHRF2. Interacts with ALKBH2; this interaction is enhanced during the S-phase of the cell cycle. Interacts with ATAD5; the interaction promotes USP1-mediated PCNA deubiquitination. Interacts (when phosphorylated) with GRB2. Interacts with ANG. Interacts with nuclear UNG; this interaction mediates UNG recruitment to S-phase replication foci. Interacts with ERCC6L2 (via an atypical PIP-box); this interaction facilitates cenrtomeric localization of ERCC6L2. Phosphorylated. Phosphorylation at Tyr-211 by EGFR stabilizes chromatin-associated PCNA. In terms of processing, acetylated by CREBBP and p300/EP300; preferentially acetylated by CREBBP on Lys-80, Lys-13 and Lys-14 and on Lys-77 by p300/EP300 upon loading on chromatin in response to UV irradiation. Lysine acetylation disrupts association with chromatin, hence promoting PCNA ubiquitination and proteasomal degradation in response to UV damage in a CREBBP- and EP300-dependent manner. Acetylation disrupts interaction with NUDT15 and promotes degradation. Post-translationally, ubiquitinated. Following DNA damage, can be either monoubiquitinated to stimulate direct bypass of DNA lesions by specialized DNA polymerases or polyubiquitinated to promote recombination-dependent DNA synthesis across DNA lesions by template switching mechanisms. Following induction of replication stress, monoubiquitinated by the UBE2B-RAD18 complex on Lys-164, leading to recruit translesion (TLS) polymerases, which are able to synthesize across DNA lesions in a potentially error-prone manner. An error-free pathway also exists and requires non-canonical polyubiquitination on Lys-164 through 'Lys-63' linkage of ubiquitin moieties by the E2 complex UBE2N-UBE2V2 and the E3 ligases, HLTF, RNF8 and SHPRH. This error-free pathway, also known as template switching, employs recombination mechanisms to synthesize across the lesion, using as a template the undamaged, newly synthesized strand of the sister chromatid. Monoubiquitination at Lys-164 also takes place in undamaged proliferating cells, and is mediated by the DCX(DTL) complex, leading to enhance PCNA-dependent translesion DNA synthesis. Sumoylated during S phase. Methylated on glutamate residues by ARMT1.

The protein localises to the nucleus. Its function is as follows. Auxiliary protein of DNA polymerase delta and epsilon, is involved in the control of eukaryotic DNA replication by increasing the polymerase's processibility during elongation of the leading strand. Induces a robust stimulatory effect on the 3'-5' exonuclease and 3'-phosphodiesterase, but not apurinic-apyrimidinic (AP) endonuclease, APEX2 activities. Has to be loaded onto DNA in order to be able to stimulate APEX2. Plays a key role in DNA damage response (DDR) by being conveniently positioned at the replication fork to coordinate DNA replication with DNA repair and DNA damage tolerance pathways. Acts as a loading platform to recruit DDR proteins that allow completion of DNA replication after DNA damage and promote postreplication repair: Monoubiquitinated PCNA leads to recruitment of translesion (TLS) polymerases, while 'Lys-63'-linked polyubiquitination of PCNA is involved in error-free pathway and employs recombination mechanisms to synthesize across the lesion. The protein is Proliferating cell nuclear antigen (Pcna) of Mus musculus (Mouse).